A 362-amino-acid polypeptide reads, in one-letter code: Probable cysteine protease RDL2 (362 aa).

A signal peptide spans 1–28 (MAATPIRVIVSALVILSVLLLSSSLGVA). Residues 29–129 (TETEIERNET…ERYLYKEGDV (101 aa)) constitute a propeptide, activation peptide. Residue N36 is glycosylated (N-linked (GlcNAc...) asparagine). Disulfide bonds link C151–C194 and C185–C228. C154 is a catalytic residue. An N-linked (GlcNAc...) asparagine glycan is attached at N234. Residues C287 and C338 are joined by a disulfide bond. Residues H293 and N313 contribute to the active site.

It belongs to the peptidase C1 family.

In terms of biological role, probable thiol protease. The sequence is that of Probable cysteine protease RDL2 from Arabidopsis thaliana (Mouse-ear cress).